Consider the following 145-residue polypeptide: Putative pre-16S rRNA nuclease (145 aa).

It belongs to the YqgF nuclease family.

Its subcellular location is the cytoplasm. Functionally, could be a nuclease involved in processing of the 5'-end of pre-16S rRNA. This chain is Putative pre-16S rRNA nuclease, found in Pseudomonas fluorescens.